The sequence spans 433 residues: Alpha-(1,3)-fucosyltransferase 4 (433 aa).

The Cytoplasmic segment spans residues 1–52 (MAPARQELQHESRCRPSRTVDAWRAAVATRGRHMETPGYRRRTRCGGWGLPR). A helical; Signal-anchor for type II membrane protein membrane pass occupies residues 53–74 (SVSSLAAVGLLCTALTTFICWG). Residues 75–433 (QLPPLPWASP…IHNLADWFQR (359 aa)) lie on the Lumenal side of the membrane. N-linked (GlcNAc...) asparagine glycosylation is found at asparagine 117 and asparagine 218.

This sequence belongs to the glycosyltransferase 10 family. In terms of tissue distribution, highest expression in stomach and colon. It is also expressed in the lung, testis, uterus, small intestine and to a lesser extent in spleen, and ovary. Present in trace amounts in brain, thymus, heart, smooth muscle, kidney and bone marrow. Not found in liver, salivary gland and pancreas.

The protein localises to the golgi apparatus. It is found in the golgi stack membrane. The enzyme catalyses a beta-D-galactosyl-(1-&gt;4)-N-acetyl-beta-D-glucosaminyl derivative + GDP-beta-L-fucose = a beta-D-galactosyl-(1-&gt;4)-[alpha-L-fucosyl-(1-&gt;3)]-N-acetyl-beta-D-glucosaminyl derivative + GDP + H(+). It catalyses the reaction an N-acetyl-alpha-neuraminyl-(2-&gt;3)-beta-D-galactosyl-(1-&gt;4)-N-acetyl-beta-D-glucosaminyl derivative + GDP-beta-L-fucose = an alpha-Neu5Ac-(2-&gt;3)-beta-D-Gal-(1-&gt;4)-[alpha-L-Fuc-(1-&gt;3)]-beta-D-GlcNAc derivative + GDP + H(+). It carries out the reaction an alpha-Neu5Ac-(2-&gt;3)-beta-D-Gal-(1-&gt;4)-beta-D-GlcNAc-(1-&gt;3)-beta-D-Gal-(1-&gt;4)-beta-D-GlcNAc derivative + GDP-beta-L-fucose = an alpha-Neu5Ac-(2-&gt;3)-beta-D-Gal-(1-&gt;4)-beta-D-GlcNAc-(1-&gt;3)-beta-D-Gal-(1-&gt;4)-[alpha-L-Fuc-(1-&gt;3)]-beta-D-GlcNAc derivative + GDP + H(+). The catalysed reaction is an alpha-Neu5Ac-(2-&gt;3)-beta-D-Gal-(1-&gt;4)-beta-D-GlcNAc6S derivative + GDP-beta-L-fucose = an alpha-Neu5Ac-(2-&gt;3)-beta-D-Gal-(1-&gt;4)-[alpha-L-Fuc-(1-&gt;3)]-beta-D-GlcNAc6S derivative + GDP + H(+). It functions in the pathway protein modification; protein glycosylation. In terms of biological role, catalyzes alpha(1-&gt;3) linkage of fucosyl moiety transferred from GDP-beta-L-fucose to N-acetyl glucosamine (GlcNAc) within type 2 lactosamine (LacNAc, Gal-beta(1-&gt;4)GlcNAc) glycan attached to N- or O-linked glycoproteins. Robustly fucosylates nonsialylated distal LacNAc unit of the polylactosamine chain to form Lewis X antigen (CD15), a glycan determinant known to mediate important cellular functions in development and immunity. Fucosylates with lower efficiency sialylated LacNAc acceptors to form sialyl Lewis X and 6-sulfo sialyl Lewis X determinants that serve as recognition epitopes for C-type lectins. Together with FUT7 contributes to SELE, SELL and SELP selectin ligand biosynthesis and selectin-dependent lymphocyte homing, leukocyte migration and blood leukocyte homeostasis. In a cell type specific manner, may also fucosylate the internal LacNAc unit of the polylactosamine chain to form VIM-2 antigen that serves as recognition epitope for SELE. This Mus musculus (Mouse) protein is Alpha-(1,3)-fucosyltransferase 4 (Fut4).